Here is a 315-residue protein sequence, read N- to C-terminus: AT-hook motif nuclear-localized protein 19 (315 aa).

Over residues 1–25 (MANPWWTGQVNLSGLETTPPGSSQL) the composition is skewed to polar residues. Disordered stretches follow at residues 1 to 104 (MANP…RDSP) and 239 to 285 (EEEA…YNMP). The segment covering 61 to 74 (DNLSGDDHEPREGA) has biased composition (basic and acidic residues). Residues 80–92 (RRPRGRPAGSKNK) constitute a DNA-binding region (a.T hook). The 145-residue stretch at 104 to 248 (PNALKSHVME…EEEAAERGGG (145 aa)) folds into the PPC domain. A compositionally biased stretch (gly residues) spans 245–276 (RGGGGGSGGVVPGQLGGGGSPLSSGAGGGDGN).

As to expression, slightly expressed in roots.

It localises to the nucleus. In terms of biological role, transcription factor that specifically binds AT-rich DNA sequences related to the nuclear matrix attachment regions (MARs). Negatively regulates plant innate immunity (PTI) to pathogens through the down-regulation of the PAMP-triggered FRK1 expression. Positively regulates defense against fungal Verticillium infection. The protein is AT-hook motif nuclear-localized protein 19 of Arabidopsis thaliana (Mouse-ear cress).